A 95-amino-acid chain; its full sequence is Aspartyl/glutamyl-tRNA(Asn/Gln) amidotransferase subunit C (95 aa).

Belongs to the GatC family. In terms of assembly, heterotrimer of A, B and C subunits.

The catalysed reaction is L-glutamyl-tRNA(Gln) + L-glutamine + ATP + H2O = L-glutaminyl-tRNA(Gln) + L-glutamate + ADP + phosphate + H(+). It catalyses the reaction L-aspartyl-tRNA(Asn) + L-glutamine + ATP + H2O = L-asparaginyl-tRNA(Asn) + L-glutamate + ADP + phosphate + 2 H(+). Allows the formation of correctly charged Asn-tRNA(Asn) or Gln-tRNA(Gln) through the transamidation of misacylated Asp-tRNA(Asn) or Glu-tRNA(Gln) in organisms which lack either or both of asparaginyl-tRNA or glutaminyl-tRNA synthetases. The reaction takes place in the presence of glutamine and ATP through an activated phospho-Asp-tRNA(Asn) or phospho-Glu-tRNA(Gln). The chain is Aspartyl/glutamyl-tRNA(Asn/Gln) amidotransferase subunit C from Geotalea uraniireducens (strain Rf4) (Geobacter uraniireducens).